The chain runs to 490 residues: GTPase Der (490 aa).

EngA-type G domains are found at residues 3-166 (PVVA…VDEI) and 203-376 (IKLA…DSST). Residues 9–16 (GRPNVGKS), 56–60 (DTGGI), 118–121 (NKTD), 209–216 (GRPNVGKS), 256–260 (DTAGV), and 321–324 (NKWD) each bind GTP. A KH-like domain is found at 377–461 (RRQSTAMLTR…PIRIQFKEGE (85 aa)).

Belongs to the TRAFAC class TrmE-Era-EngA-EngB-Septin-like GTPase superfamily. EngA (Der) GTPase family. Associates with the 50S ribosomal subunit.

Its function is as follows. GTPase that plays an essential role in the late steps of ribosome biogenesis. This chain is GTPase Der, found in Enterobacter sp. (strain 638).